We begin with the raw amino-acid sequence, 463 residues long: Exodeoxyribonuclease 7 large subunit (463 aa).

This sequence belongs to the XseA family. In terms of assembly, heterooligomer composed of large and small subunits.

Its subcellular location is the cytoplasm. The enzyme catalyses Exonucleolytic cleavage in either 5'- to 3'- or 3'- to 5'-direction to yield nucleoside 5'-phosphates.. Its function is as follows. Bidirectionally degrades single-stranded DNA into large acid-insoluble oligonucleotides, which are then degraded further into small acid-soluble oligonucleotides. The chain is Exodeoxyribonuclease 7 large subunit from Klebsiella pneumoniae subsp. pneumoniae (strain ATCC 700721 / MGH 78578).